We begin with the raw amino-acid sequence, 250 residues long: Probable transcriptional regulatory protein Lferr_0060 (250 aa).

This sequence belongs to the TACO1 family.

It localises to the cytoplasm. The protein is Probable transcriptional regulatory protein Lferr_0060 of Acidithiobacillus ferrooxidans (strain ATCC 53993 / BNL-5-31) (Leptospirillum ferrooxidans (ATCC 53993)).